We begin with the raw amino-acid sequence, 148 residues long: uncharacterized protein (148 aa).

This is an uncharacterized protein from Methanocaldococcus jannaschii (strain ATCC 43067 / DSM 2661 / JAL-1 / JCM 10045 / NBRC 100440) (Methanococcus jannaschii).